We begin with the raw amino-acid sequence, 525 residues long: Heat shock factor protein 1 (525 aa).

An N-acetylmethionine modification is found at methionine 1. Residues 15–120 form a DNA-binding domain region; the sequence is VPAFLTKLWT…LLENIKRKVT (106 aa). N6-acetyllysine is present on lysine 80. Position 91 is an N6-acetyllysine; alternate (lysine 91). Lysine 91 is covalently cross-linked (Glycyl lysine isopeptide (Lys-Gly) (interchain with G-Cter in SUMO2); alternate). Residue lysine 118 is modified to N6-acetyllysine. Position 121 is a phosphoserine; by MAPKAPK2 (serine 121). Residues lysine 126 and lysine 131 each participate in a glycyl lysine isopeptide (Lys-Gly) (interchain with G-Cter in SUMO2) cross-link. Positions 130-203 are hydrophobic repeat HR-A/B; that stretch reads IKIRQDSVTR…ISLVQSNRIL (74 aa). Threonine 142 carries the phosphothreonine; by CK2 modification. Residues lysine 150 and lysine 188 each carry the N6-acetyllysine modification. The segment at 203–224 is d domain; it reads LGVKRKIPLMLSDSNSAHSVPK. N6-acetyllysine; alternate is present on lysine 208. A Glycyl lysine isopeptide (Lys-Gly) (interchain with G-Cter in SUMO2); alternate cross-link involves residue lysine 208. At serine 216 the chain carries Phosphoserine; by PLK1. The tract at residues 221–310 is regulatory domain; sequence SVPKYGRQYS…PPSPPHSPRV (90 aa). A Glycyl lysine isopeptide (Lys-Gly) (interchain with G-Cter in SUMO2) cross-link involves residue lysine 224. Serine 230 is modified (phosphoserine; by CAMK2A). 2 disordered regions span residues 272–327 and 340–365; these read APTS…PLSP and PTPAASNTAPMDTTGAQAPALPTPST. Phosphoserine is present on residues serine 275 and serine 292. An N6-acetyllysine; alternate modification is found at lysine 298. Lysine 298 participates in a covalent cross-link: Glycyl lysine isopeptide (Lys-Gly) (interchain with G-Cter in SUMO2); alternate. A Glycyl lysine isopeptide (Lys-Gly) (interchain with G-Cter in SUMO); alternate cross-link involves residue lysine 298. A phosphoserine mark is found at serine 303, serine 307, serine 314, and serine 319. Serine 320 carries the post-translational modification Phosphoserine; by PKA. At threonine 323 the chain carries Phosphothreonine. Serine 326 carries the post-translational modification Phosphoserine; by MAPK12. Over residues 343–355 the composition is skewed to polar residues; it reads AASNTAPMDTTGA. Residue serine 345 is modified to Phosphoserine. A transactivation domain region spans residues 367–525; the sequence is EKCLSVACLD…PHKAKDPTVS (159 aa). Positions 380–405 are hydrophobic repeat HR-C; it reads LSDHLDAMDSNLDNLQTMLTSHGFSV. The 9aaTAD signature appears at 408–416; the sequence is SALLDLFSP. At serine 415 the chain carries Phosphoserine; by PLK1. The residue at position 440 (serine 440) is a Phosphoserine. Disordered stretches follow at residues 441–460 and 495–525; these read PQEPPRPIEAENSNPDSGKQ and YFSEGDDYTDDPTISLLTGTEPHKAKDPTVS. Residues 515–525 show a composition bias toward basic and acidic residues; that stretch reads EPHKAKDPTVS. Lysine 520 carries the N6-acetyllysine modification.

This sequence belongs to the HSF family. As to quaternary structure, monomer; cytoplasmic latent and transcriptionally inactive monomeric form in unstressed cells. Homotrimer; in response to stress, such as heat shock, homotrimerizes and translocates into the nucleus, binds to heat shock element (HSE) sequences in promoter of heat shock protein (HSP) genes and acquires transcriptional ability. Interacts (via monomeric form) with FKBP4; this interaction occurs in unstressed cells. Associates (via monomeric form) with HSP90 proteins in a multichaperone complex in unnstressed cell; this association maintains HSF1 in a non-DNA-binding and transcriptional inactive form by preventing HSF1 homotrimerization. Homotrimeric transactivation activity is modulated by protein-protein interactions and post-translational modifications. Interacts with HSP90AA1; this interaction is decreased in a IER5-dependent manner, promoting HSF1 accumulation in the nucleus, homotrimerization and DNA-binding activities. Part (via regulatory domain in the homotrimeric form) of a large heat shock-induced HSP90-dependent multichaperone complex at least composed of FKBP4, FKBP5, HSP90 proteins, PPID, PPP5C and PTGES3; this association maintains the HSF1 homotrimeric DNA-bound form in a transcriptionally inactive form. Interacts with BAG3 (via BAG domain); this interaction occurs in normal and heat-shocked cells promoting nuclear shuttling of HSF1 in a BAG3-dependent manner. Interacts (via homotrimeric and hyperphosphorylated form) with FKBP4; this interaction occurs upon heat shock in a HSP90-dependent multichaperone complex. Interacts (via homotrimeric form preferentially) with EEF1A proteins. In heat shocked cells, stress-denatured proteins compete with HSF1 homotrimeric DNA-bound form for association of the HSP90-dependent multichaperone complex, and hence alleviating repression of HSF1-mediated transcriptional activity. Interacts (via homotrimeric form preferentially) with DAXX; this interaction relieves homotrimeric HSF1 from repression of its transcriptional activity by HSP90-dependent multichaperone complex upon heat shock. Interacts (via D domain and preferentially with hyperphosphorylated form) with JNK1; this interaction occurs under both normal growth conditions and immediately upon heat shock. Interacts (via D domain and preferentially with hyperphosphorylated form) with MAPK3; this interaction occurs upon heat shock. Interacts with IER5 (via central region); this interaction promotes PPP2CA-induced dephosphorylation on Ser-121, Ser-307, Ser-314 and Thr-323 and HSF1 transactivation activity. Found in a ribonucleoprotein complex composed of the HSF1 homotrimeric form, translation elongation factor eEF1A proteins and non-coding RNA heat shock RNA-1 (HSR1); this complex occurs upon heat shock and stimulates HSF1 DNA-binding activity. Interacts (via transactivation domain) with HSPA1A/HSP70 and DNAJB1; these interactions result in the inhibition of heat shock- and HSF1-induced transcriptional activity during the attenuation and recovery phase from heat shock. Interacts (via Ser-303 and Ser-307 phosphorylated form) with YWHAE; this interaction promotes HSF1 sequestration in the cytoplasm in an ERK-dependent manner. Found in a complex with IER5 and PPP2CA. Interacts with TPR; this interaction increases upon heat shock and stimulates export of HSP70 mRNA. Interacts with SYMPK (via N-terminus) and CSTF2; these interactions occur upon heat shock. Interacts (via transactivation domain) with HSPA8. Interacts with EEF1D; this interaction occurs at heat shock promoter element (HSE) sequences. Interacts with MAPKAPK2. Interacts with PRKACA/PKA. Interacts (via transactivation domain) with GTF2A2. Interacts (via transactivation domain) with GTF2B. Interacts (via transactivation domain) with TBP. Interacts with CDK9, CCNT1 and EP300. Interacts (via N-terminus) with XRCC5 (via N-terminus) and XRCC6 (via N-terminus); these interactions are direct and prevent XRCC5/XRCC6 heterodimeric binding and non-homologous end joining (NHEJ) repair activities induced by ionizing radiation (IR). Interacts with PLK1; this interaction occurs during the early mitotic period, increases upon heat shock but does not modulate neither HSF1 homotrimerization and DNA-binding activities. Interacts (via Ser-216 phosphorylated form) with CDC20; this interaction occurs in mitosis in a MAD2L1-dependent manner and prevents PLK1-stimulated degradation of HSF1 by blocking the recruitment of the SCF(BTRC) ubiquitin ligase complex. Interacts with MAD2L1; this interaction occurs in mitosis. Interacts with BTRC; this interaction occurs during mitosis, induces its ubiquitin-dependent degradation following stimulus-dependent phosphorylation at Ser-216, a process inhibited by CDC20. Interacts with HSP90AA1 and HSP90AB1. Forms a complex with TTC5/STRAP and p300/EP300; these interactions augment chromatin-bound HSF1 and p300/EP300 histone acetyltransferase activity. In terms of processing, phosphorylated. Phosphorylated in unstressed cells; this phosphorylation is constitutive and implicated in the repression of HSF1 transcriptional activity. Phosphorylated on Ser-121 by MAPKAPK2; this phosphorylation promotes interaction with HSP90 proteins and inhibits HSF1 homotrimerization, DNA-binding and transactivation activities. Phosphorylation on Ser-303 by GSK3B/GSK3-beat and on Ser-307 by MAPK3 within the regulatory domain is involved in the repression of HSF1 transcriptional activity and occurs in a RAF1-dependent manner. Phosphorylation on Ser-303 and Ser-307 increases HSF1 nuclear export in a YWHAE- and XPO1/CRM1-dependent manner. Phosphorylation on Ser-307 is a prerequisite for phosphorylation on Ser-303. According to, Ser-303 is not phosphorylated in unstressed cells. Phosphorylated on Ser-415 by PLK1; phosphorylation promotes nuclear translocation upon heat shock. Hyperphosphorylated upon heat shock and during the attenuation and recovery phase period of the heat shock response. Phosphorylated on Thr-142; this phosphorylation increases HSF1 transactivation activity upon heat shock. Phosphorylation on Ser-230 by CAMK2A; this phosphorylation enhances HSF1 transactivation activity upon heat shock. Phosphorylation on Ser-326 by MAPK12; this phosphorylation enhances HSF1 nuclear translocation, homotrimerization and transactivation activities upon heat shock. Phosphorylated on Ser-320 by PRKACA/PKA; this phosphorylation promotes nuclear localization and transcriptional activity upon heat shock. Phosphorylated by MAPK8; this phosphorylation occurs upon heat shock, induces HSF1 translocation into nuclear stress bodies and negatively regulates transactivation activity. Neither basal nor stress-inducible phosphorylation on Ser-230, Ser-292, Ser-303, Ser-307, Ser-314, Ser-319, Ser-320, Thr-323, Ser-326, Ser-338, Ser-345, Ser-364 and Thr-365 within the regulatory domain is involved in the regulation of HSF1 subcellular localization or DNA-binding activity; however, it negatively regulates HSF1 transactivation activity. Phosphorylated on Ser-216 by PLK1 in the early mitotic period; this phosphorylation regulates HSF1 localization to the spindle pole, the recruitment of the SCF(BTRC) ubiquitin ligase complex inducing HSF1 degradation, and hence mitotic progression. Dephosphorylated on Ser-121, Ser-307, Ser-314 and Thr-323 by phosphatase PPP2CA in an IER5-dependent manner, leading to HSF1-mediated transactivation activity. Post-translationally, sumoylated with SUMO1 and SUMO2 upon heat shock in a ERK2-dependent manner. Sumoylated by SUMO1 on Lys-298; sumoylation occurs upon heat shock and promotes its localization to nuclear stress bodies and DNA-binding activity. Phosphorylation on Ser-303 and Ser-307 is probably a prerequisite for sumoylation. Acetylated on Lys-118; this acetylation is decreased in a IER5-dependent manner. Acetylated on Lys-118, Lys-208 and Lys-298; these acetylations occur in a EP300-dependent manner. Acetylated on Lys-80; this acetylation inhibits DNA-binding activity upon heat shock. Deacetylated on Lys-80 by SIRT1; this deacetylation increases DNA-binding activity. In terms of processing, ubiquitinated by SCF(BTRC) and degraded following stimulus-dependent phosphorylation at Ser-216 by PLK1 in mitosis. Polyubiquitinated. Undergoes proteasomal degradation upon heat shock and during the attenuation and recovery phase period of the heat shock response.

It is found in the nucleus. It localises to the cytoplasm. Its subcellular location is the nucleoplasm. The protein resides in the perinuclear region. The protein localises to the cytoskeleton. It is found in the spindle pole. It localises to the microtubule organizing center. Its subcellular location is the centrosome. The protein resides in the chromosome. The protein localises to the centromere. It is found in the kinetochore. Functions as a stress-inducible and DNA-binding transcription factor that plays a central role in the transcriptional activation of the heat shock response (HSR), leading to the expression of a large class of molecular chaperones, heat shock proteins (HSPs), that protect cells from cellular insult damage. In unstressed cells, is present in a HSP90-containing multichaperone complex that maintains it in a non-DNA-binding inactivated monomeric form. Upon exposure to heat and other stress stimuli, undergoes homotrimerization and activates HSP gene transcription through binding to site-specific heat shock elements (HSEs) present in the promoter regions of HSP genes. Upon heat shock stress, forms a chromatin-associated complex with TTC5/STRAP and p300/EP300 to stimulate HSR transcription, therefore increasing cell survival. Activation is reversible, and during the attenuation and recovery phase period of the HSR, returns to its unactivated form. Binds to inverted 5'-NGAAN-3' pentamer DNA sequences. Binds to chromatin at heat shock gene promoters. Activates transcription of transcription factor FOXR1 which in turn activates transcription of the heat shock chaperones HSPA1A and HSPA6 and the antioxidant NADPH-dependent reductase DHRS2. Binds the promoter region upstream of exon 1 of Mpv17l to activate expression of the M-LPS isoform which is involved in metabolism of reactive oxygen species. Also serves several other functions independently of its transcriptional activity. Involved in the repression of Ras-induced transcriptional activation of the c-fos gene in heat-stressed cells. Positively regulates pre-mRNA 3'-end processing and polyadenylation of HSP70 mRNA upon heat-stressed cells in a symplekin (SYMPK)-dependent manner. Plays a role in nuclear export of stress-induced HSP70 mRNA. Plays a role in the regulation of mitotic progression. Also plays a role as a negative regulator of non-homologous end joining (NHEJ) repair activity in a DNA damage-dependent manner. Involved in stress-induced cancer cell proliferation in a IER5-dependent manner. In Mus musculus (Mouse), this protein is Heat shock factor protein 1.